The chain runs to 1173 residues: MDAEIFFNPYLHTKRSRRDWRAEPAADNKESFLQIVPRGVLYDGATGLIKTQCELSPRMFFEDREYVLDPVMVWPGLDIAADGEAVPPCDFVFHTFDQVVSLVFAEGRGRARRWRQHISPAGNVIRLFGATALGTPVCVNVFGQKSYFYCENRPGEDLRDVIHDLADASRSPGPLSASPSRRAPLVAVRLRPGDIPHLYRVSFNNWSMARKVGALMVQEGRRAYEIGVDPLARFLIDRKIPSFGWLRVGRFSRRCNGQTSTAVIELDCQVGDVVAGQPLPNWPPYRCLSFDIECMSASGAFPQAEVLDDIVIQISCVCFVVGGSGAHRFTFAEKHLFTIGSCAPVEDVWVYTFPSEYEMLLGFFIFFNRFSPDFLTGYNINGFDIKYLLHRMCRVYQKDAGRFTKLRRGGRFFVNSPDGSGDAFGGRSGVIKVFCAGTVVLDMYPVCSAKTSAPNYKLDTMAERYLGQRKEDLSYKEIPVAFLGGEEGRARVGKYCVQDGARQGPLNVIAYHYEAAASPNLARIPLRRVIFDGQQIRIYTCILEECSARGMVLPSLPSSPPSSGGDGAGLEGGDGGTAGRRKKKRSGSAPDGEDEDDPEGGDEGENGECRENGLEKEGSQGSASGNVGYQGATVLAPECGYHHNPILVFDFASLYPSIIMSNNLCYSTLLVDGSPPVPDEDVLEVVVGEATRYRFVREHVRRSLLAELLVRWLKQRKLVRDAMKACGDEKQRMFMDKQQLALKVTCNAFYGFTGVAAPMLPCLPIAASITKIGRDMLLATSAYMERHCNDVEFLVSEVGVPREAVDRDALRVKIVYGDTDSVFVGFRGIGREVLVKVAGKLAAAVTRDLFRDPVRLEFEKMFVSLMMICKKRYIGKVYGENKLCMKGVDLVRRHACAFVRSIVSEVVDVIFHDEAVSEGAMRLSEMSFEELRRQGVPVGFFPVIRRLCDARDDLFLDRVPVAQLVLSSVLSQDASRYKQKNLPHLAVYRSLVERGEELPGVGDRIEYVLTCPDESKKRAPNYEVAEDPAHVREAKIPIHAEKYFDQIVKAVTNVLLPVFPKDMPRRERFFAYVLPIRTYLPEVFLRMSKEDRECGAYLARESGLGMNSFIVYGEDTCGSRVGEGPGRGEGLGVGGGEGTRPPRKNGHARLVSGCLYGSRPFNKKDRFVTLHIE.

2 disordered regions span residues 554 to 625 and 1123 to 1144; these read PSLP…SASG and EGPGRGEGLGVGGGEGTRPPRK. A compositionally biased stretch (gly residues) spans 564 to 578; the sequence is GGDGAGLEGGDGGTA. The segment covering 591–606 has biased composition (acidic residues); it reads DGEDEDDPEGGDEGEN. Over residues 607–618 the composition is skewed to basic and acidic residues; it reads GECRENGLEKEG. A compositionally biased stretch (gly residues) spans 1123–1138; sequence EGPGRGEGLGVGGGEG.

This sequence belongs to the DNA polymerase type-B family.

The protein localises to the host nucleus. It carries out the reaction DNA(n) + a 2'-deoxyribonucleoside 5'-triphosphate = DNA(n+1) + diphosphate. This chain is DNA polymerase catalytic subunit (UL54), found in Rattus.